The primary structure comprises 45 residues: Peroxidase 3 (45 aa).

This sequence belongs to the peroxidase family. Classical plant (class III) peroxidase subfamily. The cofactor is heme b. Requires Ca(2+) as cofactor.

The protein resides in the secreted. The enzyme catalyses 2 a phenolic donor + H2O2 = 2 a phenolic radical donor + 2 H2O. In terms of biological role, removal of H(2)O(2), oxidation of toxic reductants, biosynthesis and degradation of lignin, suberization, auxin catabolism, response to environmental stresses such as wounding, pathogen attack and oxidative stress. These functions might be dependent on each isozyme/isoform in each plant tissue. The protein is Peroxidase 3 of Capsicum annuum (Capsicum pepper).